Reading from the N-terminus, the 399-residue chain is Elongation factor Tu (399 aa).

One can recognise a tr-type G domain in the interval lysine 10–threonine 209. The tract at residues glycine 19–threonine 26 is G1. Glycine 19–threonine 26 serves as a coordination point for GTP. Threonine 26 contributes to the Mg(2+) binding site. The tract at residues glycine 60–alanine 64 is G2. The tract at residues aspartate 81 to glycine 84 is G3. GTP-binding positions include aspartate 81–histidine 85 and asparagine 136–aspartate 139. Residues asparagine 136–aspartate 139 are G4. The segment at serine 174–lysine 176 is G5.

It belongs to the TRAFAC class translation factor GTPase superfamily. Classic translation factor GTPase family. EF-Tu/EF-1A subfamily. Monomer.

Its subcellular location is the cytoplasm. The catalysed reaction is GTP + H2O = GDP + phosphate + H(+). GTP hydrolase that promotes the GTP-dependent binding of aminoacyl-tRNA to the A-site of ribosomes during protein biosynthesis. The sequence is that of Elongation factor Tu from Sulfurimonas denitrificans (strain ATCC 33889 / DSM 1251) (Thiomicrospira denitrificans (strain ATCC 33889 / DSM 1251)).